The following is a 64-amino-acid chain: Alternative prion protein (64 aa).

The disordered stretch occupies residues 1 to 22; it reads MEHWGEPIPGTGQSWRQPLSTS. Positions 11 to 22 are enriched in polar residues; sequence TGQSWRQPLSTS. The chain crosses the membrane as a helical span at residues 40 to 58; that stretch reads WRWLGSAPWWWLGTATWWW.

Its subcellular location is the mitochondrion outer membrane. In Ovis aries (Sheep), this protein is Alternative prion protein.